Reading from the N-terminus, the 460-residue chain is NADH-ubiquinone oxidoreductase chain 4 (460 aa).

A run of 13 helical transmembrane segments spans residues 20 to 42, 61 to 81, 94 to 113, 117 to 139, 148 to 168, 195 to 215, 225 to 245, 258 to 278, 285 to 304, 308 to 330, 351 to 371, 394 to 414, and 436 to 456; these read AKWL…LSWL, PLST…ILAS, RAYI…AFGA, IMFY…RWGN, TYFL…LLLM, LWWA…GVHL, PIAG…YGMM, LAYP…SICL, SLIA…GILI, WGFT…LFCL, MILP…LALP, LILT…LFLM, and LLII…ELMW.

This sequence belongs to the complex I subunit 4 family.

It localises to the mitochondrion membrane. The enzyme catalyses a ubiquinone + NADH + 5 H(+)(in) = a ubiquinol + NAD(+) + 4 H(+)(out). In terms of biological role, core subunit of the mitochondrial membrane respiratory chain NADH dehydrogenase (Complex I) that is believed to belong to the minimal assembly required for catalysis. Complex I functions in the transfer of electrons from NADH to the respiratory chain. The immediate electron acceptor for the enzyme is believed to be ubiquinone. The protein is NADH-ubiquinone oxidoreductase chain 4 (MT-ND4) of Oncorhynchus mykiss (Rainbow trout).